The sequence spans 244 residues: Uridylate kinase (244 aa).

Position 15–18 (15–18 (KLSG)) interacts with ATP. Residues 23–28 (GSEGFG) are involved in allosteric activation by GTP. Residue G57 participates in UMP binding. The ATP site is built by G58 and R62. UMP-binding positions include D77 and 138-145 (TGNPFFTT). ATP contacts are provided by T165, F171, and D174.

This sequence belongs to the UMP kinase family. As to quaternary structure, homohexamer.

It is found in the cytoplasm. It catalyses the reaction UMP + ATP = UDP + ADP. It participates in pyrimidine metabolism; CTP biosynthesis via de novo pathway; UDP from UMP (UMPK route): step 1/1. With respect to regulation, allosterically activated by GTP. Inhibited by UTP. Catalyzes the reversible phosphorylation of UMP to UDP. This is Uridylate kinase from Aeromonas hydrophila subsp. hydrophila (strain ATCC 7966 / DSM 30187 / BCRC 13018 / CCUG 14551 / JCM 1027 / KCTC 2358 / NCIMB 9240 / NCTC 8049).